The sequence spans 3914 residues: Trichosetin synthetase PKS-NRPS1 (3914 aa).

Positions 4–420 (NEPIAIIGSA…GTNAHAIIEA (417 aa)) constitute a Ketosynthase family 3 (KS3) domain. Active-site for beta-ketoacyl synthase activity residues include cysteine 177, histidine 301, and histidine 340. The malonyl-CoA:ACP transacylase (MAT) domain stretch occupies residues 525 to 847 (VLTGQGAQWP…REKDDIQQFA (323 aa)). Residues 913–1047 (HPILGRRCHD…AHVKASLSVP (135 aa)) are N-terminal hotdog fold. Residues 913-1214 (HPILGRRCHD…MELVPFSPAT (302 aa)) form a dehydratase (DH) domain region. The 304-residue stretch at 913–1216 (HPILGRRCHD…LVPFSPATPE (304 aa)) folds into the PKS/mFAS DH domain. Catalysis depends on histidine 946, which acts as the Proton acceptor; for dehydratase activity. The C-terminal hotdog fold stretch occupies residues 1062-1216 (LRKVEVDRFY…LVPFSPATPE (155 aa)). The active-site Proton donor; for dehydratase activity is aspartate 1122. The tract at residues 1364–1593 (EGFGLDLVNK…DLPETKSTEL (230 aa)) is methyltransferase (MT) domain. The ketoreductase (KR) domain stretch occupies residues 2083-2255 (TFLLIGLSGE…VAASSIDISS (173 aa)). The Carrier 1 domain maps to 2356–2436 (LADVKTKADA…DLIEESLNLI (81 aa)). Serine 2396 is modified (O-(pantetheine 4'-phosphoryl)serine). The tract at residues 2447–2518 (EAGSTPTTQP…DSTDNSTPLK (72 aa)) is disordered. A compositionally biased stretch (polar residues) spans 2481–2500 (QQTGSDSSRSPIDTPLTSME). Residues 2529–2956 (SYGQAGFWFL…VQGTNKAADT (428 aa)) are condensation (C) domain. An adenylation (A) (KR) domain region spans residues 2991–3388 (QTIQANSTKV…LLFCDGRLED (398 aa)). Residues 3502-3579 (GTLTVAEQRL…TMAVVLESCG (78 aa)) enclose the Carrier 2 domain. Serine 3539 is modified (O-(pantetheine 4'-phosphoryl)serine). Residues 3615–3831 (LTGSAGYLGR…VLPTGDIVKA (217 aa)) form a reductase (RED) domain region.

In the C-terminal section; belongs to the NRP synthetase family.

It catalyses the reaction L-serine + 7 malonyl-CoA + acetyl-CoA + 2 S-adenosyl-L-methionine + ATP + 8 NADPH + 11 H(+) = (5S)-3-[(2E,6R,8E,10E,12E)-2,6-dimethyltetradeca-2,8,10,12-tetraenoyl]-5-(hydroxymethyl)pyrrolidine-2,4-dione + AMP + 2 S-adenosyl-L-homocysteine + 7 CO2 + diphosphate + 8 NADP(+) + 8 CoA + 6 H2O. The protein operates within mycotoxin biosynthesis. In terms of biological role, hybrid PKS-NRPS synthetase; part of the gene cluster that mediates the biosynthesis of trichosetin, a trans-fused decalin-containing tetramic acid with antimicrobial activity. The PKS module of PKS-NRPS1 together with the enoylreductase (ER) catalyze the formation of the polyketide unit which is then conjugated to L-serine by the condensation domain of the PKS-NRPS1 NRPS module. Activity of the Dieckmann cyclase domain (RED) results in release of the Dieckmann product intermediate. Diels-Alderase (DA) is involved in endo-selective Diels-Alder cycloaddition to form the decalin ring, leading to the production of N-desmethylequisetin also called trichosetin. The cluster does not contain the equisetin N-methyltransferase and consequently, trichosetin is isolated as final product. This Gibberella fujikuroi (strain CBS 195.34 / IMI 58289 / NRRL A-6831) (Bakanae and foot rot disease fungus) protein is Trichosetin synthetase PKS-NRPS1.